Consider the following 384-residue polypeptide: Na(+)/H(+) antiporter NhaA (384 aa).

11 helical membrane-spanning segments follow: residues 17-37, 53-73, 89-109, 118-138, 147-167, 171-191, 198-218, 251-271, 283-303, 321-341, and 354-374; these read SGLF…SAIA, LEYW…GLEL, MLPI…FLVM, GAGI…SLLG, IFLT…IAVF, TLLW…LILN, LIPY…SGVH, PVAF…VLSS, IGIA…LSML, ILAV…ITLL, and FVIL…LKYV.

Belongs to the NhaA Na(+)/H(+) (TC 2.A.33) antiporter family.

The protein localises to the cell inner membrane. The catalysed reaction is Na(+)(in) + 2 H(+)(out) = Na(+)(out) + 2 H(+)(in). Its function is as follows. Na(+)/H(+) antiporter that extrudes sodium in exchange for external protons. The polypeptide is Na(+)/H(+) antiporter NhaA (Flavobacterium psychrophilum (strain ATCC 49511 / DSM 21280 / CIP 103535 / JIP02/86)).